The chain runs to 249 residues: NAD-dependent protein deacylase 2 (249 aa).

One can recognise a Deacetylase sirtuin-type domain in the interval 1–240 (MNVADLLASS…PRLVEEVKRR (240 aa)). Position 18–37 (18–37 (GAGISAESGVPTFRGPGGLW)) interacts with NAD(+). Substrate contacts are provided by Tyr62 and Arg65. 96 to 99 (QNVD) provides a ligand contact to NAD(+). The active-site Proton acceptor is the His114. Zn(2+) contacts are provided by Cys122, Cys125, Cys142, and Cys145. Residues 182 to 184 (GTS), 208 to 210 (NVE), and Ala226 each bind NAD(+).

The protein belongs to the sirtuin family. Class III subfamily. Requires Zn(2+) as cofactor.

It localises to the cytoplasm. The enzyme catalyses N(6)-acetyl-L-lysyl-[protein] + NAD(+) + H2O = 2''-O-acetyl-ADP-D-ribose + nicotinamide + L-lysyl-[protein]. It catalyses the reaction N(6)-succinyl-L-lysyl-[protein] + NAD(+) + H2O = 2''-O-succinyl-ADP-D-ribose + nicotinamide + L-lysyl-[protein]. NAD-dependent lysine deacetylase and desuccinylase that specifically removes acetyl and succinyl groups on target proteins. Modulates the activities of several proteins which are inactive in their acylated form. Deacetylates the N-terminal lysine residue of Alba, the major archaeal chromatin protein and that, in turn, increases Alba's DNA binding affinity, thereby repressing transcription. In Pyrobaculum aerophilum (strain ATCC 51768 / DSM 7523 / JCM 9630 / CIP 104966 / NBRC 100827 / IM2), this protein is NAD-dependent protein deacylase 2.